Reading from the N-terminus, the 526-residue chain is Amino acid transporter AVT1E (526 aa).

The segment at 1 to 49 (MKQNETFDQEREDLYHTFDEEDEESQTESSVPSTPLSRNRSEDVPVPWP) is disordered. A compositionally biased stretch (basic and acidic residues) spans 8–18 (DQEREDLYHTF). 11 helical membrane-spanning segments follow: residues 140-160 (SVLNGINVLCGVALLTMPYAV), 165-185 (WLGLFILFSFGIITFYTGILL), 212-232 (ILVSILLYVELYASCVEYIIM), 253-273 (LDSTQVFAITTTLIVLPTVWL), 278-298 (LLSYLSAGGVISSILLALCLF), 320-340 (IPVAIGIYGFGFGSHSVFPNI), 353-373 (VLLISFAFCTLFYIAVAVCGF), 397-417 (IAVWTAVVTPMTKYALTITPV), 436-456 (GVSMLFRTILVLSTLVVALTV), 458-478 (FFATVAALIGSFIAMLIALIF), and 494-514 (FQIGICILIVIIGIVSGCCGT).

Belongs to the amino acid/polyamine transporter 2 family. Amino acid/auxin permease (AAAP) (TC 2.A.18.5) subfamily.

It localises to the membrane. The protein is Amino acid transporter AVT1E of Arabidopsis thaliana (Mouse-ear cress).